The chain runs to 220 residues: Deoxyribose-phosphate aldolase (220 aa).

The active-site Proton donor/acceptor is D89. K151 (schiff-base intermediate with acetaldehyde) is an active-site residue. The active-site Proton donor/acceptor is K180.

It belongs to the DeoC/FbaB aldolase family. DeoC type 1 subfamily.

The protein localises to the cytoplasm. It carries out the reaction 2-deoxy-D-ribose 5-phosphate = D-glyceraldehyde 3-phosphate + acetaldehyde. The protein operates within carbohydrate degradation; 2-deoxy-D-ribose 1-phosphate degradation; D-glyceraldehyde 3-phosphate and acetaldehyde from 2-deoxy-alpha-D-ribose 1-phosphate: step 2/2. Catalyzes a reversible aldol reaction between acetaldehyde and D-glyceraldehyde 3-phosphate to generate 2-deoxy-D-ribose 5-phosphate. This chain is Deoxyribose-phosphate aldolase, found in Streptococcus pneumoniae (strain Taiwan19F-14).